A 500-amino-acid polypeptide reads, in one-letter code: Ephrin type-B receptor 3 (500 aa).

One can recognise a Fibronectin type-III domain in the interval 1–64; it reads PLLVLDLIIQ…NPVDFSTSLY (64 aa). Residues 1–113 are Extracellular-facing; sequence PLLVLDLIIQ…ERSVQDLLPL (113 aa). The tract at residues 76–103 is disordered; that stretch reads HLRRREELTTTTTGLKSREERFQKSDDP. Residues 91-103 are compositionally biased toward basic and acidic residues; it reads KSREERFQKSDDP. The helical transmembrane segment at 114–134 threads the bilayer; sequence IVGSASAGFVVILAMIVIAVV. At 135 to 500 the chain is on the cytoplasmic side; it reads CLRRQRTGSE…QMSQTLPIRV (366 aa). At Tyr168 the chain carries Phosphotyrosine; by autocatalysis. Residues 187-450 enclose the Protein kinase domain; the sequence is VKIEEVIGAG…QIVSTLDKFL (264 aa). Residues 193–201 and Lys219 contribute to the ATP site; that span reads IGAGEFGEV. Asp312 (proton acceptor) is an active-site residue. An SAM domain is found at 421-500; the sequence is LHQLMLECWV…QMSQTLPIRV (80 aa). The PDZ-binding signature appears at 498 to 500; it reads IRV.

It belongs to the protein kinase superfamily. Tyr protein kinase family. Ephrin receptor subfamily. In terms of assembly, heterotetramer upon binding of the ligand. The heterotetramer is composed of an ephrin dimer and a receptor dimer. Oligomerization is probably required to induce biological responses. Phosphorylated. Autophosphorylates upon ligand-binding. Autophosphorylation on Tyr-168 is required for interaction with SH2 domain-containing proteins. Widely expressed in the developing nervous system.

The protein localises to the cell membrane. It localises to the cell projection. Its subcellular location is the dendrite. It carries out the reaction L-tyrosyl-[protein] + ATP = O-phospho-L-tyrosyl-[protein] + ADP + H(+). Its function is as follows. Receptor tyrosine kinase which binds promiscuously transmembrane ephrin-B family ligands residing on adjacent cells, leading to contact-dependent bidirectional signaling into neighboring cells. The signaling pathway downstream of the receptor is referred to as forward signaling while the signaling pathway downstream of the ephrin ligand is referred to as reverse signaling. Generally has an overlapping and redundant function with EPHB2. Like EPHB2, functions in axon guidance during development. In addition to its role in axon guidance also plays an important redundant role with other ephrin-B receptors in development and maturation of dendritic spines and the formation of excitatory synapses. May control other aspects of development through regulation of cell migration and positioning. May play a role in early pattern formation within the developing nervous system. The protein is Ephrin type-B receptor 3 (ephb3) of Danio rerio (Zebrafish).